An 86-amino-acid polypeptide reads, in one-letter code: Exodeoxyribonuclease 7 small subunit (86 aa).

The disordered stretch occupies residues 1-26; sequence MQDELFETEKIPPKNTKNTKNAPKKS.

It belongs to the XseB family. As to quaternary structure, heterooligomer composed of large and small subunits.

It localises to the cytoplasm. The catalysed reaction is Exonucleolytic cleavage in either 5'- to 3'- or 3'- to 5'-direction to yield nucleoside 5'-phosphates.. In terms of biological role, bidirectionally degrades single-stranded DNA into large acid-insoluble oligonucleotides, which are then degraded further into small acid-soluble oligonucleotides. The chain is Exodeoxyribonuclease 7 small subunit from Helicobacter pylori (strain ATCC 700392 / 26695) (Campylobacter pylori).